A 464-amino-acid polypeptide reads, in one-letter code: tRNA modification GTPase MnmE (464 aa).

(6S)-5-formyl-5,6,7,8-tetrahydrofolate-binding residues include arginine 25, glutamate 87, and lysine 130. One can recognise a TrmE-type G domain in the interval glycine 226–glycine 386. Asparagine 236 contacts K(+). Residues asparagine 236–serine 241, threonine 255–threonine 261, and aspartate 280–glycine 283 contribute to the GTP site. Serine 240 is a Mg(2+) binding site. 3 residues coordinate K(+): threonine 255, isoleucine 257, and threonine 260. Mg(2+) is bound at residue threonine 261. Lysine 464 contributes to the (6S)-5-formyl-5,6,7,8-tetrahydrofolate binding site.

The protein belongs to the TRAFAC class TrmE-Era-EngA-EngB-Septin-like GTPase superfamily. TrmE GTPase family. In terms of assembly, homodimer. Heterotetramer of two MnmE and two MnmG subunits. It depends on K(+) as a cofactor.

Its subcellular location is the cytoplasm. Exhibits a very high intrinsic GTPase hydrolysis rate. Involved in the addition of a carboxymethylaminomethyl (cmnm) group at the wobble position (U34) of certain tRNAs, forming tRNA-cmnm(5)s(2)U34. This chain is tRNA modification GTPase MnmE, found in Burkholderia orbicola (strain MC0-3).